We begin with the raw amino-acid sequence, 457 residues long: Argininosuccinate lyase (457 aa).

It belongs to the lyase 1 family. Argininosuccinate lyase subfamily.

The protein resides in the cytoplasm. The enzyme catalyses 2-(N(omega)-L-arginino)succinate = fumarate + L-arginine. Its pathway is amino-acid biosynthesis; L-arginine biosynthesis; L-arginine from L-ornithine and carbamoyl phosphate: step 3/3. The polypeptide is Argininosuccinate lyase (Pasteurella multocida (strain Pm70)).